A 294-amino-acid polypeptide reads, in one-letter code: Acetylglutamate kinase (294 aa).

Substrate-binding positions include 67-68 (GG), R89, and N193.

This sequence belongs to the acetylglutamate kinase family. ArgB subfamily.

It localises to the cytoplasm. The catalysed reaction is N-acetyl-L-glutamate + ATP = N-acetyl-L-glutamyl 5-phosphate + ADP. It functions in the pathway amino-acid biosynthesis; L-arginine biosynthesis; N(2)-acetyl-L-ornithine from L-glutamate: step 2/4. In terms of biological role, catalyzes the ATP-dependent phosphorylation of N-acetyl-L-glutamate. In Leptospira interrogans serogroup Icterohaemorrhagiae serovar copenhageni (strain Fiocruz L1-130), this protein is Acetylglutamate kinase.